The sequence spans 347 residues: DNA-directed RNA polymerase subunit alpha (347 aa).

The alpha N-terminal domain (alpha-NTD) stretch occupies residues 1–243; that stretch reads MLFREGTRLI…DQISVFINFD (243 aa). Positions 255–347 are alpha C-terminal domain (alpha-CTD); the sequence is SGSSDLNDNL…EWKRKQHHEA (93 aa).

It belongs to the RNA polymerase alpha chain family. Homodimer. The RNAP catalytic core consists of 2 alpha, 1 beta, 1 beta' and 1 omega subunit. When a sigma factor is associated with the core the holoenzyme is formed, which can initiate transcription.

The catalysed reaction is RNA(n) + a ribonucleoside 5'-triphosphate = RNA(n+1) + diphosphate. In terms of biological role, DNA-dependent RNA polymerase catalyzes the transcription of DNA into RNA using the four ribonucleoside triphosphates as substrates. This is DNA-directed RNA polymerase subunit alpha from Lawsonia intracellularis (strain PHE/MN1-00).